The sequence spans 24 residues: Calcium-binding shell glycoprotein P50 (24 aa).

A disordered region spans residues 1 to 24; the sequence is KDALEHTGFAPKKDGEEHVEWNYN.

In terms of processing, glycosylated. In terms of tissue distribution, nacreous and prismatic layers of the shell.

Functionally, calcium-binding. The protein is Calcium-binding shell glycoprotein P50 of Unio pictorum (Painter's mussel).